A 285-amino-acid polypeptide reads, in one-letter code: 2,4-didehydro-3-deoxy-L-rhamnonate hydrolase (285 aa).

A pyruvate-binding site is contributed by Leu73. Mg(2+) is bound by residues Glu119, Glu121, and Asp150. The pyruvate site is built by Lys168 and Thr238.

Belongs to the FAH family. As to quaternary structure, homodimer. Mg(2+) serves as cofactor.

The enzyme catalyses 2,4-didehydro-3-deoxy-L-rhamnonate + H2O = (S)-lactate + pyruvate + H(+). Its pathway is carbohydrate degradation; L-rhamnose degradation. In terms of biological role, hydrolase that catalyzes the hydrolysis of 2,4-didehydro-3-deoxy-L-rhamnonate to pyruvate and L-lactate. Can also hydrolyze L-2,4-diketo-3-deoxylyxonate and L-2,4-diketo-3-deoxymannonate. In vitro can also use acylpyruvates such as acetylpyruvate and trimethylacetopyruvate. Catalyzes the fifth (last) step in an alternative pathway for rhamnose utilization that does not involve phosphorylated intermediates. This is 2,4-didehydro-3-deoxy-L-rhamnonate hydrolase from Sphingomonas sp. (strain SKA58).